The chain runs to 2957 residues: Toxin PAU_02230 (2957 aa).

Positions 949 to 968 are disordered; the sequence is TSVSPAETAQSTPEPLSDFA. The interval 2115 to 2144 is membrane localization domain that interacts with the inner leaflet of the plasma membrane; the sequence is EWFKHSETGLKGGGPIDDIRKYIARKSAIK. Residues 2115-2449 are tyrosine glycosyltransferase PaToxG; that stretch reads EWFKHSETGL…TSTIVTPLAP (335 aa). UDP-N-acetyl-alpha-D-glucosamine-binding positions include 2169–2171 and 2259–2260; these read IWI and SD. 2 residues coordinate a divalent metal cation: aspartate 2276 and aspartate 2278. Residues 2276-2279 carry the DxDD motif motif; the sequence is DIDD. Asparagine 2312 is a binding site for UDP-N-acetyl-alpha-D-glucosamine. Residues 2450 to 2672 form a sseI-like deamidase PaToxD region; that stretch reads KTEMLPPVPS…NYSVNPTAEN (223 aa). Catalysis depends on for deamidase activity residues cysteine 2509, histidine 2547, and aspartate 2562. The tract at residues 2667 to 2705 is disordered; that stretch reads NPTAENLSPPPPPPIPSHGQVPKTVTPPPPPMRSPLSLS.

Requires a divalent metal cation as cofactor.

It localises to the secreted. Its subcellular location is the host cell membrane. It catalyses the reaction L-tyrosyl-[protein] + UDP-N-acetyl-alpha-D-glucosamine = O-(N-acetyl-alpha-D-glucosaminyl)-L-tyrosyl-[protein] + UDP + H(+). It carries out the reaction L-glutaminyl-[protein] + H2O = L-glutamyl-[protein] + NH4(+). Toxin that acts on host cells by modifying Rho proteins by tyrosine GlcNAcylation and heterotrimeric G alpha proteins by deamidation. Catalyzes the mono-O-GlcNAcylation of small GTPases of the Rho family (RhoA, RhoB, RhoC, Rac1, Rac2, Rac3, Cdc42) in eukaryotic host cells at the conserved tyrosine residue located in the switch I region (Tyr-32/34), using UDP-N-acetylglucosamine (UDP-GlcNAc) as the sugar donor; other GTPases of the Rho, Ras or Rab families are not substrates. Tyrosine glycosylation inhibits Rho activation and prevents interaction with downstream effectors, resulting in actin disassembly, inhibition of phagocytosis, cell rounding, and toxicity toward insects and mammalian cells. Also catalyzes the deamidation of the catalytic glutamine in heterotrimeric G alpha proteins (Gi, Gq/11), which blocks GTP hydrolysis and arrests the G proteins in a permanent active state leading to activation of Rho GTPases. Thus, PaTox hijacks host GTPase signaling in a bidirectional manner by deamidation-induced activation and glycosylation-induced inactivation of GTPases. The polypeptide is Toxin PAU_02230 (Photorhabdus asymbiotica subsp. asymbiotica (strain ATCC 43949 / 3105-77) (Xenorhabdus luminescens (strain 2))).